We begin with the raw amino-acid sequence, 245 residues long: CTD nuclear envelope phosphatase 1B (245 aa).

Residues Cys7–Leu29 traverse the membrane as a helical segment. The FCP1 homology domain occupies Asn58–Leu225.

It belongs to the dullard family.

The protein resides in the endoplasmic reticulum membrane. Its subcellular location is the nucleus membrane. The catalysed reaction is O-phospho-L-seryl-[protein] + H2O = L-seryl-[protein] + phosphate. It catalyses the reaction O-phospho-L-threonyl-[protein] + H2O = L-threonyl-[protein] + phosphate. Serine/threonine protein phosphatase that may dephosphorylate and activate lipins. Lipins are phosphatidate phosphatases that catalyze the conversion of phosphatidic acid to diacylglycerol and control the metabolism of fatty acids at different levels. May indirectly modulate the lipid composition of nuclear and/or endoplasmic reticulum membranes and be required for proper nuclear membrane morphology and/or dynamics. May also indirectly regulate the production of lipid droplets and triacylglycerol. May antagonize BMP signaling. This Danio rerio (Zebrafish) protein is CTD nuclear envelope phosphatase 1B (ctdnep1b).